Reading from the N-terminus, the 347-residue chain is Autoinducer 2 import system permease protein LsrC (347 aa).

9 helical membrane passes run 14–34, 39–59, 72–92, 93–113, 115–135, 155–175, 213–233, 249–269, and 284–304; these read LLAI…YLSV, MVFS…MVML, GMCA…PVAC, LATL…VAWL, IPAI…MLLW, VFLG…LMAW, LNGG…GFIP, VLGG…ILGA, and IPAW…LVFD.

It belongs to the binding-protein-dependent transport system permease family. AraH/RbsC subfamily. As to quaternary structure, the complex is composed of two ATP-binding proteins (LsrA), two transmembrane proteins (LsrC and LsrD) and a solute-binding protein (LsrB).

It is found in the cell inner membrane. Its function is as follows. Part of the ABC transporter complex LsrABCD involved in autoinducer 2 (AI-2) import. Probably responsible for the translocation of the substrate across the membrane. This is Autoinducer 2 import system permease protein LsrC (lsrC) from Salmonella choleraesuis (strain SC-B67).